The following is a 324-amino-acid chain: Beta-ketoacyl-[acyl-carrier-protein] synthase III (324 aa).

Catalysis depends on residues C114 and H251. Residues 252 to 256 (QANRR) form an ACP-binding region. N281 is a catalytic residue.

This sequence belongs to the thiolase-like superfamily. FabH family. Homodimer.

It is found in the cytoplasm. It carries out the reaction malonyl-[ACP] + acetyl-CoA + H(+) = 3-oxobutanoyl-[ACP] + CO2 + CoA. It functions in the pathway lipid metabolism; fatty acid biosynthesis. Functionally, catalyzes the condensation reaction of fatty acid synthesis by the addition to an acyl acceptor of two carbons from malonyl-ACP. Catalyzes the first condensation reaction which initiates fatty acid synthesis and may therefore play a role in governing the total rate of fatty acid production. Possesses both acetoacetyl-ACP synthase and acetyl transacylase activities. Its substrate specificity determines the biosynthesis of branched-chain and/or straight-chain of fatty acids. This is Beta-ketoacyl-[acyl-carrier-protein] synthase III from Paramagnetospirillum magneticum (strain ATCC 700264 / AMB-1) (Magnetospirillum magneticum).